Here is a 79-residue protein sequence, read N- to C-terminus: Major outer membrane lipoprotein Lpp 2 (79 aa).

The signal sequence occupies residues 1-21 (MNRTNQLILGAVVLGSTLLAG). Residue C22 is the site of N-palmitoyl cysteine attachment. The S-diacylglycerol cysteine moiety is linked to residue C22. 2 consecutive repeats follow at residues 25-35 (NAKIDQLSSDV) and 39-49 (SAKVEQLSNDV). Residues 28-69 (IDQLSSDVQTLSAKVEQLSNDVNAMRSDVQAAKDDAARANQR) are a coiled coil. K79 is modified (N6-murein peptidoglycan lysine).

The protein belongs to the Lpp family. Homotrimer.

The protein resides in the cell outer membrane. It localises to the secreted. The protein localises to the cell wall. Plays an important role in virulence. A highly abundant outer membrane lipoprotein that controls the distance between the inner and outer membranes. The only protein known to be covalently linked to the peptidoglycan network (PGN). Also non-covalently binds the PGN. The link between the cell outer membrane and PGN contributes to maintenance of the structural and functional integrity of the cell envelope, and maintains the correct distance between the PGN and the outer membrane. This chain is Major outer membrane lipoprotein Lpp 2, found in Salmonella typhimurium (strain LT2 / SGSC1412 / ATCC 700720).